The following is a 307-amino-acid chain: Cyclin-dependent kinase 5 activator 1 (307 aa).

Ser8 bears the Phosphoserine; by CDK5 mark. The tract at residues 96–136 is disordered; it reads STFAQPPPAQPPAPPANQLSGSQTGVSSSVKKAPHPSVTSA. Over residues 100-110 the composition is skewed to pro residues; that stretch reads QPPPAQPPAPP. Positions 112-125 are enriched in polar residues; it reads NQLSGSQTGVSSSV. Thr138 carries the phosphothreonine; by CDK5 modification.

The protein belongs to the cyclin-dependent kinase 5 activator family. In terms of assembly, heterodimer composed of a catalytic subunit CDK5 and a regulatory subunit CDK5R1 (p25) and macromolecular complex composed of at least CDK5, CDK5R1 (p35) and CDK5RAP1 or CDK5RAP2 or CDK5RAP3. Only the heterodimer shows kinase activity. Interacts with EPHA4 and NGEF; may mediate the activation of NGEF by EPHA4. Interacts with RASGRF2. The complex p35/CDK5 interacts with CLOCK. In terms of processing, the p35 form is proteolytically cleaved by calpain, giving rise to the p25 form. P35 has a 5 to 10 fold shorter half-life compared to p25. The conversion results in deregulation of the CDK5 kinase: p25/CDK5 kinase displays an increased and altered tau phosphorylation in comparison to the p35/CDK5 kinase in vivo. Post-translationally, myristoylated. A proper myristoylation signal is essential for the proper distribution of p35. Phosphorylation at Ser-8 and Thr-138 by CDK5 prevents calpain-mediated proteolysis. In terms of processing, ubiquitinated, leading to its degradation: degradation of p35 by proteasome results in down-regulation of CDK5 activity. During this process, CDK5 phosphorylates p35 and induces its ubiquitination and subsequent degradation. Ubiquitinated by the CRL2(FEM1B) complex, which recognizes the -Gly-Leu-Asp-Arg C-degron at the C-terminus, leading to its degradation. As to expression, brain and neuron specific.

It is found in the cell membrane. It localises to the cell projection. Its subcellular location is the neuron projection. The protein resides in the nucleus. The protein localises to the cytoplasm. It is found in the perinuclear region. It localises to the perikaryon. Its function is as follows. p35 is a neuron specific activator of CDK5. The complex p35/CDK5 is required for neurite outgrowth and cortical lamination. Involved in dendritic spine morphogenesis by mediating the EFNA1-EPHA4 signaling. Activator of TPKII. The complex p35/CDK5 participates in the regulation of the circadian clock by modulating the function of CLOCK protein: phosphorylates CLOCK at 'Thr-451' and 'Thr-461' and regulates the transcriptional activity of the CLOCK-BMAL1 heterodimer in association with altered stability and subcellular distribution. The chain is Cyclin-dependent kinase 5 activator 1 (CDK5R1) from Spermophilus citellus (European ground squirrel).